The chain runs to 216 residues: uncharacterized protein (216 aa).

This is an uncharacterized protein from Saccharomyces cerevisiae (strain ATCC 204508 / S288c) (Baker's yeast).